The chain runs to 724 residues: Eukaryotic elongation factor 2 kinase (724 aa).

Ala-2 carries the post-translational modification N-acetylalanine. The segment at 11-35 (EGVDGGGSSGAGRHGDSDTDSDDDE) is disordered. Residues 13–22 (VDGGGSSGAG) show a composition bias toward gly residues. 4 positions are modified to phosphoserine: Ser-18, Ser-27, Ser-70, and Ser-73. Ser-77 is modified (phosphoserine; by autocatalysis and TRPM7). The tract at residues 80–93 (FKEAWKHAIEKAKH) is calmodulin-binding. The Alpha-type protein kinase domain maps to 115 to 325 (RYNAVTGEWL…ICQSMGLAPF (211 aa)). Ser-242 carries the phosphoserine modification. Position 295 to 301 (295 to 301 (GDGNLGV)) interacts with ATP. Position 347 is a phosphothreonine (Thr-347). A Phosphothreonine; by autocatalysis modification is found at Thr-352. The segment at 353–476 (EEKCGSPRIR…PESDEDSLGS (124 aa)) is disordered. Ser-358 is subject to Phosphoserine; by MAPK13 and CDK1. Over residues 364–376 (LSGSRPPLLLRLS) the composition is skewed to low complexity. 2 positions are modified to phosphoserine: Ser-365 and Ser-391. Residues 385–403 (SDVTFDSLPSSPSSATPHS) are compositionally biased toward polar residues. Ser-397 is modified (phosphoserine; by AMPK). Composition is skewed to basic and acidic residues over residues 421–435 (GPRD…RDSE) and 444–468 (SEKR…RRPE). Residues Ser-434, Ser-444, Ser-469, Ser-473, and Ser-476 each carry the phosphoserine modification. At Ser-499 the chain carries Phosphoserine; by PKA.

Belongs to the protein kinase superfamily. Alpha-type protein kinase family. In terms of assembly, monomer or homodimer. Interacts with Calmodulin/CALM1; this interaction is strictly required for phosphorylation activity. The N-terminus is blocked. In terms of processing, autophosphorylated at multiple residues, Thr-347 being the major site. Phosphorylated by AMP-activated protein kinase AMPK at Ser-397 leading to EEF2K activation and protein synthesis inhibition. Phosphorylated by TRPM7 at Ser-77 resulting in improved protein stability, higher EE2F phosphorylated and subsequently reduced rate of protein synthesis. Phosphorylation by other kinases such as CDK1 and MAPK13 at Ser-358 or RPS6KA1 and RPS6KB1 at Ser-365 instead decrease EEF2K activity and promote protein synthesis. As to expression, widely expressed, with high levels in reticulocytes and skeletal muscle.

It carries out the reaction [translation elongation factor 2] + ATP = [translation elongation factor 2]-phosphate + ADP + H(+). With respect to regulation, undergoes calcium/calmodulin-dependent intramolecular autophosphorylation, and this results in it becoming partially calcium/calmodulin-independent. Functionally, threonine kinase that regulates protein synthesis by controlling the rate of peptide chain elongation. Upon activation by a variety of upstream kinases including AMPK or TRPM7, phosphorylates the elongation factor EEF2 at a single site, renders it unable to bind ribosomes and thus inactive. In turn, the rate of protein synthesis is reduced. The chain is Eukaryotic elongation factor 2 kinase from Rattus norvegicus (Rat).